Consider the following 171-residue polypeptide: ATP synthase subunit b (171 aa).

Residues 12-34 form a helical membrane-spanning segment; sequence FGLNLNLFETNVINLAVVIFGLY.

The protein belongs to the ATPase B chain family. In terms of assembly, F-type ATPases have 2 components, F(1) - the catalytic core - and F(0) - the membrane proton channel. F(1) has five subunits: alpha(3), beta(3), gamma(1), delta(1), epsilon(1). F(0) has four main subunits: a(1), b(1), b'(1) and c(10-14). The alpha and beta chains form an alternating ring which encloses part of the gamma chain. F(1) is attached to F(0) by a central stalk formed by the gamma and epsilon chains, while a peripheral stalk is formed by the delta, b and b' chains.

The protein resides in the cellular thylakoid membrane. In terms of biological role, f(1)F(0) ATP synthase produces ATP from ADP in the presence of a proton or sodium gradient. F-type ATPases consist of two structural domains, F(1) containing the extramembraneous catalytic core and F(0) containing the membrane proton channel, linked together by a central stalk and a peripheral stalk. During catalysis, ATP synthesis in the catalytic domain of F(1) is coupled via a rotary mechanism of the central stalk subunits to proton translocation. Its function is as follows. Component of the F(0) channel, it forms part of the peripheral stalk, linking F(1) to F(0). This chain is ATP synthase subunit b, found in Prochlorococcus marinus (strain MIT 9211).